Here is an 85-residue protein sequence, read N- to C-terminus: Small ribosomal subunit protein bS20 (85 aa).

It belongs to the bacterial ribosomal protein bS20 family.

Binds directly to 16S ribosomal RNA. This is Small ribosomal subunit protein bS20 from Ruminiclostridium cellulolyticum (strain ATCC 35319 / DSM 5812 / JCM 6584 / H10) (Clostridium cellulolyticum).